Here is a 75-residue protein sequence, read N- to C-terminus: Conotoxin Vc6a (75 aa).

Residues 1–22 (MKLTCVVIVAVLFLTANTFATA) form the signal peptide. A propeptide spanning residues 23–49 (DDPRNGLENLFLKAHHEMNPEASKLNE) is cleaved from the precursor. 3 cysteine pairs are disulfide-bonded: Cys-51/Cys-66, Cys-58/Cys-69, and Cys-65/Cys-74.

Expressed by the venom duct.

It localises to the secreted. The chain is Conotoxin Vc6a from Conus victoriae (Queen Victoria cone).